A 179-amino-acid chain; its full sequence is Large ribosomal subunit protein uL5 (179 aa).

This sequence belongs to the universal ribosomal protein uL5 family. In terms of assembly, part of the 50S ribosomal subunit; part of the 5S rRNA/L5/L18/L25 subcomplex. Contacts the 5S rRNA and the P site tRNA. Forms a bridge to the 30S subunit in the 70S ribosome.

In terms of biological role, this is one of the proteins that bind and probably mediate the attachment of the 5S RNA into the large ribosomal subunit, where it forms part of the central protuberance. In the 70S ribosome it contacts protein S13 of the 30S subunit (bridge B1b), connecting the 2 subunits; this bridge is implicated in subunit movement. Contacts the P site tRNA; the 5S rRNA and some of its associated proteins might help stabilize positioning of ribosome-bound tRNAs. In Histophilus somni (strain 129Pt) (Haemophilus somnus), this protein is Large ribosomal subunit protein uL5.